We begin with the raw amino-acid sequence, 304 residues long: Phosphoribosylaminoimidazole-succinocarboxamide synthase (304 aa).

It belongs to the SAICAR synthetase family.

The catalysed reaction is 5-amino-1-(5-phospho-D-ribosyl)imidazole-4-carboxylate + L-aspartate + ATP = (2S)-2-[5-amino-1-(5-phospho-beta-D-ribosyl)imidazole-4-carboxamido]succinate + ADP + phosphate + 2 H(+). It functions in the pathway purine metabolism; IMP biosynthesis via de novo pathway; 5-amino-1-(5-phospho-D-ribosyl)imidazole-4-carboxamide from 5-amino-1-(5-phospho-D-ribosyl)imidazole-4-carboxylate: step 1/2. The polypeptide is Phosphoribosylaminoimidazole-succinocarboxamide synthase (Streptomyces griseus subsp. griseus (strain JCM 4626 / CBS 651.72 / NBRC 13350 / KCC S-0626 / ISP 5235)).